Consider the following 268-residue polypeptide: Shikimate dehydrogenase (NADP(+)) (268 aa).

Residues 14–16 and Thr61 each bind shikimate; that span reads SKS. Lys65 functions as the Proton acceptor in the catalytic mechanism. Residues Asn86 and Asp102 each contribute to the shikimate site. NADP(+) contacts are provided by residues 126–130, 149–154, and Met213; these read GAGGA and NRTFSK. Position 215 (Tyr215) interacts with shikimate. NADP(+) is bound at residue Gly238.

This sequence belongs to the shikimate dehydrogenase family. As to quaternary structure, homodimer.

The catalysed reaction is shikimate + NADP(+) = 3-dehydroshikimate + NADPH + H(+). The protein operates within metabolic intermediate biosynthesis; chorismate biosynthesis; chorismate from D-erythrose 4-phosphate and phosphoenolpyruvate: step 4/7. Functionally, involved in the biosynthesis of the chorismate, which leads to the biosynthesis of aromatic amino acids. Catalyzes the reversible NADPH linked reduction of 3-dehydroshikimate (DHSA) to yield shikimate (SA). This chain is Shikimate dehydrogenase (NADP(+)), found in Haemophilus influenzae (strain PittEE).